A 117-amino-acid polypeptide reads, in one-letter code: DNA-directed RNA polymerase subunit omega (117 aa).

The segment covering 96-105 (KEEAEEEAKQ) has biased composition (basic and acidic residues). Residues 96 to 117 (KEEAEEEAKQKNSRAAKAAAAE) are disordered. Low complexity predominate over residues 108–117 (SRAAKAAAAE).

The protein belongs to the RNA polymerase subunit omega family. In terms of assembly, the RNAP catalytic core consists of 2 alpha, 1 beta, 1 beta' and 1 omega subunit. When a sigma factor is associated with the core the holoenzyme is formed, which can initiate transcription.

The enzyme catalyses RNA(n) + a ribonucleoside 5'-triphosphate = RNA(n+1) + diphosphate. Its function is as follows. Promotes RNA polymerase assembly. Latches the N- and C-terminal regions of the beta' subunit thereby facilitating its interaction with the beta and alpha subunits. In Lactococcus lactis subsp. cremoris (strain SK11), this protein is DNA-directed RNA polymerase subunit omega.